The primary structure comprises 82 residues: Putative membrane protein insertion efficiency factor (82 aa).

This sequence belongs to the UPF0161 family.

The protein resides in the cell inner membrane. In terms of biological role, could be involved in insertion of integral membrane proteins into the membrane. The chain is Putative membrane protein insertion efficiency factor from Francisella tularensis subsp. novicida (strain U112).